The sequence spans 219 residues: Uracil-DNA glycosylase (219 aa).

The active-site Proton acceptor is Asp61.

This sequence belongs to the uracil-DNA glycosylase (UDG) superfamily. UNG family.

The protein localises to the cytoplasm. It catalyses the reaction Hydrolyzes single-stranded DNA or mismatched double-stranded DNA and polynucleotides, releasing free uracil.. Functionally, excises uracil residues from the DNA which can arise as a result of misincorporation of dUMP residues by DNA polymerase or due to deamination of cytosine. This chain is Uracil-DNA glycosylase, found in Neisseria meningitidis serogroup C (strain 053442).